The sequence spans 191 residues: Xanthine phosphoribosyltransferase (191 aa).

Xanthine-binding residues include L20 and N27. 5-phospho-alpha-D-ribose 1-diphosphate is bound at residue 128–132 (ANGQA). K156 lines the xanthine pocket.

This sequence belongs to the purine/pyrimidine phosphoribosyltransferase family. Xpt subfamily. As to quaternary structure, homodimer.

It is found in the cytoplasm. It catalyses the reaction XMP + diphosphate = xanthine + 5-phospho-alpha-D-ribose 1-diphosphate. It participates in purine metabolism; XMP biosynthesis via salvage pathway; XMP from xanthine: step 1/1. Functionally, converts the preformed base xanthine, a product of nucleic acid breakdown, to xanthosine 5'-monophosphate (XMP), so it can be reused for RNA or DNA synthesis. In Acinetobacter baumannii (strain AB307-0294), this protein is Xanthine phosphoribosyltransferase.